The chain runs to 82 residues: Delta-actitoxin-Aeq2b 1 (82 aa).

Residues 1 to 19 (MNRLMILVFAAVILALASA) form the signal peptide. Positions 20 to 26 (DEDVDIA) are excised as a propeptide. Intrachain disulfides connect C32/C79, C34/C69, and C62/C80.

This sequence belongs to the sea anemone sodium channel inhibitory toxin family. Type I subfamily.

Its subcellular location is the secreted. It localises to the nematocyst. Functionally, binds specifically to voltage-gated sodium channels (Nav), thereby delaying their inactivation during signal transduction. Causes death to crabs. The chain is Delta-actitoxin-Aeq2b 1 from Actinia equina (Beadlet anemone).